Consider the following 676-residue polypeptide: Envelope glycoprotein (676 aa).

The first 32 residues, 1–32 (MEGLSLLQLPRDKFRKSSFFVWVIILFQKAFS), serve as a signal peptide directing secretion. Residues 33 to 650 (MPLGVVTNST…DDNWWTGWRQ (618 aa)) lie on the Extracellular side of the membrane. Asn-40 carries an N-linked (GlcNAc...) asparagine; by host glycan. Intrachain disulfides connect Cys-53-Cys-609, Cys-108-Cys-135, Cys-121-Cys-147, Cys-511-Cys-556, and Cys-601-Cys-608. The receptor-binding stretch occupies residues 54 to 201 (KDHLASTDQL…TFLQSPPIRE (148 aa)). N-linked (GlcNAc...) asparagine; by host glycans are attached at residues Asn-204, Asn-208, Asn-238, Asn-257, Asn-268, Asn-296, and Asn-314. A mucin-like region region spans residues 305 to 485 (ELSFETLSLN…STSNGLITST (181 aa)). The segment at 313-351 (LNETEDDDATSSRTTKGRISDRATRKYSDLVPKDSPGMV) is disordered. Positions 330–344 (RISDRATRKYSDLVP) are enriched in basic and acidic residues. A glycan (N-linked (GlcNAc...) asparagine; by host) is linked at Asn-366. The interval 406 to 458 (SSSQILSSSPTMAPSPETQTSTTYTPKLPVMTTEESTTPPRNSPGSTTEAPTL) is disordered. Polar residues-rich tracts occupy residues 415 to 430 (PTMA…TTYT) and 438 to 458 (TEES…APTL). Asn-463 is a glycosylation site (N-linked (GlcNAc...) asparagine; by host). The tract at residues 524-539 (HNAAGIAWIPYFGPGA) is fusion peptide. The stretch at 554 to 595 (LVCGLRQLANETTQALQLFLRATTELRTYTILNRKAIDFLLR) forms a coiled coil. Asn-563 is a glycosylation site (N-linked (GlcNAc...) asparagine; by host). The stretch at 615–634 (WTKNITDKINQIIHDFIDNP) forms a coiled coil. Asn-618 carries an N-linked (GlcNAc...) asparagine; by host glycan. The helical transmembrane segment at 651-671 (WIPAGIGITGIIIAIIALLCV) threads the bilayer. S-palmitoyl cysteine; by host attachment occurs at residues Cys-670 and Cys-672. Residues 672 to 676 (CKLLC) lie on the Cytoplasmic side of the membrane.

The protein belongs to the filoviruses glycoprotein family. In terms of assembly, homotrimer; each monomer consists of a GP1 and a GP2 subunit linked by disulfide bonds. The resulting peplomers (GP1,2) protrude from the virus surface as spikes. Interacts with host integrin alpha-V/ITGAV. Interacts with host CLEC10A. Binds also to host CD209 and CLEC4M/DC-SIGN(R). Interacts with host FOLR1. Interacts with BST2; this interaction inhibits the antiviral effect of BST2 and this allows viral release from infected cells. Interacts with host FCN1; this interaction enhances viral entry. Interacts with host TLR4; this interaction induces cell death in T-lymphocytes or proinflammatory cytokines and SOCS1 production in monocytes. Interacts with host entry receptor NPC1. As to quaternary structure, GP1 and GP2delta are part of GP1,2delta soluble complexes released by ectodomain shedding. Post-translationally, the signal peptide region modulates GP's high mannose glycosylation, thereby determining the efficiency of the interactions with DC-SIGN(R). In terms of processing, N-glycosylated. O-glycosylated in the mucin-like region. Post-translationally, palmitoylation of GP2 is not required for its function. In terms of processing, specific enzymatic cleavages in vivo yield mature proteins. The precursor is processed into GP1 and GP2 by host cell furin in the trans Golgi, and maybe by other host proteases, to yield the mature GP1 and GP2 proteins. The cleavage site corresponds to the furin optimal cleavage sequence [KR]-X-[KR]-R. This cleavage does not seem to be required for function. After the internalization of the virus into cell endosomes, GP1 C-terminus is removed by the endosomal proteases cathepsin B, cathepsin L, or both, leaving a 19-kDa N-terminal fragment which is further digested by cathepsin B. Proteolytic processing of GP1,2 by host ADAM17 can remove the transmembrane anchor of GP2 and leads to shedding of complexes consisting in GP1 and truncated GP2 (GP1,2delta).

The protein resides in the virion membrane. It localises to the host cell membrane. The protein localises to the secreted. In terms of biological role, trimeric GP1,2 complexes form the virion surface spikes and mediate the viral entry processes, with GP1 acting as the receptor-binding subunit and GP2 as the membrane fusion subunit. At later times of infection, down-regulates the expression of various host cell surface molecules that are essential for immune surveillance and cell adhesion. Down-modulates several integrins including ITGA1, ITGA2, ITGA3, ITGA4, ITGA5, ITGA6, ITGAV and ITGB1. This decrease in cell adhesion molecules may lead to cell detachment, contributing to the disruption of blood vessel integrity and hemorrhages developed during infection (cytotoxicity). Interacts with host TLR4 and thereby stimulates the differentiation and activation of monocytes leading to bystander death of T-lymphocytes. Down-regulates as well the function of host natural killer cells. Counteracts the antiviral effect of host BST2/tetherin that restricts release of progeny virions from infected cells. However, cooperates with VP40 and host BST2 to activate canonical NF-kappa-B pathway in a manner dependent on neddylation. Functions as a decoy for anti-GP1,2 antibodies thereby contributing to viral immune evasion. Interacts and activates host macrophages and dendritic cells inducing up-regulation of cytokine transcription. This effect is mediated throught activation of host TLR4. Functionally, responsible for binding to the receptor(s) on target cells. Interacts with CD209/DC-SIGN and CLEC4M/DC-SIGNR which act as cofactors for virus entry into dendritic cells (DCs) and endothelial cells. Binding to the macrophage specific lectin CLEC10A also seem to enhance virus infectivity. Interaction with FOLR1/folate receptor alpha may be a cofactor for virus entry in some cell types, although results are contradictory. Members of the Tyro3 receptor tyrosine kinase family also seem to be cell entry factors in filovirus infection. Once attached, the virions are internalized through clathrin-dependent endocytosis and/or macropinocytosis. After internalization of the virus into the endosomes of the host cell, proteolysis of GP1 by two cysteine proteases, CTSB/cathepsin B and CTSL/cathepsin L removes the glycan cap and allows GP1 binding to the host entry receptor NPC1. NPC1-binding, Ca(2+) and acidic pH induce a conformational change of GP2, which unmasks its fusion peptide and permit membranes fusion. Its function is as follows. Acts as a class I viral fusion protein. Under the current model, the protein has at least 3 conformational states: pre-fusion native state, pre-hairpin intermediate state, and post-fusion hairpin state. During viral and target cell membrane fusion, the coiled coil regions (heptad repeats) assume a trimer-of-hairpins structure, positioning the fusion peptide in close proximity to the C-terminal region of the ectodomain. The formation of this structure appears to drive apposition and subsequent fusion of viral and target cell membranes. Responsible for penetration of the virus into the cell cytoplasm by mediating the fusion of the membrane of the endocytosed virus particle with the endosomal membrane. Low pH in endosomes induces an irreversible conformational change in GP2, releasing the fusion hydrophobic peptide. The polypeptide is Envelope glycoprotein (GP) (Epomops franqueti (Franquet's epauletted fruit bat)).